We begin with the raw amino-acid sequence, 172 residues long: Protein CapG (172 aa).

This sequence belongs to the transferase hexapeptide repeat family.

Its pathway is capsule biogenesis; capsule polysaccharide biosynthesis. Required for the biosynthesis of type 1 capsular polysaccharide. This Staphylococcus aureus protein is Protein CapG (capG).